Consider the following 138-residue polypeptide: ATP synthase epsilon chain (138 aa).

This sequence belongs to the ATPase epsilon chain family. F-type ATPases have 2 components, CF(1) - the catalytic core - and CF(0) - the membrane proton channel. CF(1) has five subunits: alpha(3), beta(3), gamma(1), delta(1), epsilon(1). CF(0) has three main subunits: a, b and c.

The protein resides in the cell inner membrane. Produces ATP from ADP in the presence of a proton gradient across the membrane. The chain is ATP synthase epsilon chain from Polaromonas naphthalenivorans (strain CJ2).